Consider the following 114-residue polypeptide: Large ribosomal subunit protein uL18 (114 aa).

Belongs to the universal ribosomal protein uL18 family. Part of the 50S ribosomal subunit; part of the 5S rRNA/L5/L18/L25 subcomplex. Contacts the 5S and 23S rRNAs.

Functionally, this is one of the proteins that bind and probably mediate the attachment of the 5S RNA into the large ribosomal subunit, where it forms part of the central protuberance. This is Large ribosomal subunit protein uL18 from Bacteroides thetaiotaomicron (strain ATCC 29148 / DSM 2079 / JCM 5827 / CCUG 10774 / NCTC 10582 / VPI-5482 / E50).